We begin with the raw amino-acid sequence, 902 residues long: Aconitate hydratase A (902 aa).

[4Fe-4S] cluster is bound by residues Cys-441, Cys-507, and Cys-510.

Belongs to the aconitase/IPM isomerase family. As to quaternary structure, monomer. Requires [4Fe-4S] cluster as cofactor.

The catalysed reaction is citrate = D-threo-isocitrate. The enzyme catalyses (2S,3R)-3-hydroxybutane-1,2,3-tricarboxylate = 2-methyl-cis-aconitate + H2O. Its pathway is carbohydrate metabolism; tricarboxylic acid cycle; isocitrate from oxaloacetate: step 2/2. It functions in the pathway organic acid metabolism; propanoate degradation. Involved in the catabolism of short chain fatty acids (SCFA) via the tricarboxylic acid (TCA)(acetyl degradation route) and probably the 2-methylcitrate cycle I (propionate degradation route). Catalyzes the reversible isomerization of citrate to isocitrate via cis-aconitate. Also able to catalyze the hydration of cis-homoaconitate to yield (R)-homocitrate, but with a lower efficiency. Could catalyze the hydration of 2-methyl-cis-aconitate to yield (2R,3S)-2-methylisocitrate. The apo form of AcnA functions as a RNA-binding regulatory protein. This is Aconitate hydratase A (acoA) from Thermus thermophilus (strain ATCC 27634 / DSM 579 / HB8).